A 336-amino-acid chain; its full sequence is Phospho-N-acetylmuramoyl-pentapeptide-transferase (336 aa).

10 helical membrane-spanning segments follow: residues 1–21 (MLPL…SLFL), 56–76 (IPTA…LLLF), 78–98 (IQLW…ALGW), 124–144 (CLAA…FLSF), 148–168 (FLGI…FAIA), 184–204 (GLDG…LVVA), 210–230 (PWAF…LGFL), 239–259 (VFMG…CAVL), 264–284 (FLLL…IVQV), and 314–334 (VVRN…IAVF).

It belongs to the glycosyltransferase 4 family. MraY subfamily. It depends on Mg(2+) as a cofactor.

It is found in the cell inner membrane. The catalysed reaction is UDP-N-acetyl-alpha-D-muramoyl-L-alanyl-gamma-D-glutamyl-meso-2,6-diaminopimeloyl-D-alanyl-D-alanine + di-trans,octa-cis-undecaprenyl phosphate = di-trans,octa-cis-undecaprenyl diphospho-N-acetyl-alpha-D-muramoyl-L-alanyl-D-glutamyl-meso-2,6-diaminopimeloyl-D-alanyl-D-alanine + UMP. It functions in the pathway cell wall biogenesis; peptidoglycan biosynthesis. Its function is as follows. Catalyzes the initial step of the lipid cycle reactions in the biosynthesis of the cell wall peptidoglycan: transfers peptidoglycan precursor phospho-MurNAc-pentapeptide from UDP-MurNAc-pentapeptide onto the lipid carrier undecaprenyl phosphate, yielding undecaprenyl-pyrophosphoryl-MurNAc-pentapeptide, known as lipid I. This Chlamydia trachomatis serovar L2b (strain UCH-1/proctitis) protein is Phospho-N-acetylmuramoyl-pentapeptide-transferase.